Consider the following 195-residue polypeptide: Imidazoleglycerol-phosphate dehydratase (195 aa).

This sequence belongs to the imidazoleglycerol-phosphate dehydratase family.

It is found in the cytoplasm. The enzyme catalyses D-erythro-1-(imidazol-4-yl)glycerol 3-phosphate = 3-(imidazol-4-yl)-2-oxopropyl phosphate + H2O. It participates in amino-acid biosynthesis; L-histidine biosynthesis; L-histidine from 5-phospho-alpha-D-ribose 1-diphosphate: step 6/9. The chain is Imidazoleglycerol-phosphate dehydratase from Shouchella clausii (strain KSM-K16) (Alkalihalobacillus clausii).